Consider the following 213-residue polypeptide: Thymidylate kinase (213 aa).

Position 10–17 (10–17) interacts with ATP; that stretch reads GLEGAGKT.

It belongs to the thymidylate kinase family.

It catalyses the reaction dTMP + ATP = dTDP + ADP. Its function is as follows. Phosphorylation of dTMP to form dTDP in both de novo and salvage pathways of dTTP synthesis. The polypeptide is Thymidylate kinase (Klebsiella pneumoniae subsp. pneumoniae (strain ATCC 700721 / MGH 78578)).